The primary structure comprises 309 residues: MSIRIIPQDELGSSEKRTADMIPPLLFPRLKNVYNRRAERLRELAENNPLGDYLRFAALIAHAQEVVLYDHPLEMDLTARIKEANDQGKPPLDIHVLPRDKHWQKLLHSLIAELKPEMSGPALAVIENLEKASEQELEQMASALFASDFASVSSDKAPFIWAALSLYWAQMASLIPGKARAEYGEARQYCPVCGSMPVSSMVQIGTTQGLRYLHCNLCETEWHVVRVKCSNCEQSRDLHYWSLENEQAAVKAESCGDCGTYLKILYQEKDPKVEAVADDLASLVLDARMEQEGFARSSINPFLFPGEGE.

The protein belongs to the FdhE family.

The protein localises to the cytoplasm. Necessary for formate dehydrogenase activity. This chain is Protein FdhE, found in Salmonella typhimurium (strain LT2 / SGSC1412 / ATCC 700720).